Consider the following 279-residue polypeptide: Undecaprenyl-diphosphatase (279 aa).

Helical transmembrane passes span 2-22 (LIIELLKAIFFGIIEGITEWL), 44-64 (AFIEMFNIVIQLGAIIAVMLI), 85-105 (WQLWLKVVIACIPSILIAVPL), 113-133 (FYFMVPIAIALIVYGIAFIWI), 163-183 (VLSIVPGTSRSGATILGAIIL), 188-208 (TVAADFTFFLAIPTMFGYSGL), 223-243 (AQVLILLVASLTAFVVSLLAI), and 255-275 (FTIFGKYRIVLGSLLLIYSFF).

It belongs to the UppP family.

It localises to the cell membrane. It catalyses the reaction di-trans,octa-cis-undecaprenyl diphosphate + H2O = di-trans,octa-cis-undecaprenyl phosphate + phosphate + H(+). Its function is as follows. Catalyzes the dephosphorylation of undecaprenyl diphosphate (UPP). Confers resistance to bacitracin. The sequence is that of Undecaprenyl-diphosphatase from Streptococcus pyogenes serotype M2 (strain MGAS10270).